The chain runs to 624 residues: Chaperone protein HtpG (624 aa).

Residues 1–336 (MKGQETRGFQ…SNDLPLNVSR (336 aa)) are a; substrate-binding. Residues 337-552 (EILQDSTVTR…ADEMSTQMAK (216 aa)) form a b region. The segment at 553–624 (LFAAAGQAVP…IRRMNQLLVS (72 aa)) is c.

Belongs to the heat shock protein 90 family. As to quaternary structure, homodimer.

Its subcellular location is the cytoplasm. Functionally, molecular chaperone. Has ATPase activity. This chain is Chaperone protein HtpG, found in Citrobacter koseri (strain ATCC BAA-895 / CDC 4225-83 / SGSC4696).